A 297-amino-acid polypeptide reads, in one-letter code: 4-hydroxy-tetrahydrodipicolinate synthase (297 aa).

Residue threonine 47 participates in pyruvate binding. Tyrosine 135 acts as the Proton donor/acceptor in catalysis. The Schiff-base intermediate with substrate role is filled by lysine 163. Isoleucine 205 contacts pyruvate.

It belongs to the DapA family. As to quaternary structure, homotetramer; dimer of dimers.

It is found in the cytoplasm. It catalyses the reaction L-aspartate 4-semialdehyde + pyruvate = (2S,4S)-4-hydroxy-2,3,4,5-tetrahydrodipicolinate + H2O + H(+). The protein operates within amino-acid biosynthesis; L-lysine biosynthesis via DAP pathway; (S)-tetrahydrodipicolinate from L-aspartate: step 3/4. Functionally, catalyzes the condensation of (S)-aspartate-beta-semialdehyde [(S)-ASA] and pyruvate to 4-hydroxy-tetrahydrodipicolinate (HTPA). The polypeptide is 4-hydroxy-tetrahydrodipicolinate synthase (Dehalococcoides mccartyi (strain CBDB1)).